Consider the following 198-residue polypeptide: Myb-related protein 340 (198 aa).

HTH myb-type domains are found at residues 10–62 (DVEV…LNYL) and 63–117 (RPDV…IQKH). DNA-binding regions (H-T-H motif) lie at residues 38 to 62 (WNTI…LNYL) and 90 to 113 (WSKI…NRTR).

In terms of tissue distribution, expressed only in flowers.

It is found in the nucleus. Its function is as follows. Transcription factor. This chain is Myb-related protein 340, found in Antirrhinum majus (Garden snapdragon).